The following is a 352-amino-acid chain: Protein RecA (352 aa).

66–73 (GPESSGKT) provides a ligand contact to ATP.

It belongs to the RecA family.

The protein resides in the cytoplasm. Can catalyze the hydrolysis of ATP in the presence of single-stranded DNA, the ATP-dependent uptake of single-stranded DNA by duplex DNA, and the ATP-dependent hybridization of homologous single-stranded DNAs. It interacts with LexA causing its activation and leading to its autocatalytic cleavage. This chain is Protein RecA, found in Psychrobacter arcticus (strain DSM 17307 / VKM B-2377 / 273-4).